The primary structure comprises 142 residues: Large ribosomal subunit protein uL13 (142 aa).

It belongs to the universal ribosomal protein uL13 family. In terms of assembly, part of the 50S ribosomal subunit.

This protein is one of the early assembly proteins of the 50S ribosomal subunit, although it is not seen to bind rRNA by itself. It is important during the early stages of 50S assembly. In Buchnera aphidicola subsp. Schizaphis graminum (strain Sg), this protein is Large ribosomal subunit protein uL13.